Consider the following 557-residue polypeptide: Arginine--tRNA ligase (557 aa).

A 'HIGH' region motif is present at residues 128–138 (ANPTGPLHVGH).

It belongs to the class-I aminoacyl-tRNA synthetase family. Monomer.

The protein localises to the cytoplasm. The catalysed reaction is tRNA(Arg) + L-arginine + ATP = L-arginyl-tRNA(Arg) + AMP + diphosphate. This chain is Arginine--tRNA ligase, found in Thiobacillus denitrificans (strain ATCC 25259 / T1).